The chain runs to 356 residues: 1-acyl-sn-glycerol-3-phosphate acyltransferase LPAT1, chloroplastic (356 aa).

The transit peptide at 1 to 56 (MDVASARSISSHPSYYGKPICSSQSSLIRISRDKVCCFGRISNGMTSFTTSLHAVP) directs the protein to the chloroplast. A helical membrane pass occupies residues 127 to 147 (GIFFCVVAGISATFLIVLMII). An HXXXXD motif motif is present at residues 202-207 (HQSFLD). Residues 224-244 (TGIFVIPIIGWAMSMMGVVPL) form a helical membrane-spanning segment.

Belongs to the 1-acyl-sn-glycerol-3-phosphate acyltransferase family. As to expression, widely expressed. Expressed at higher level in leaves. Expressed at lower level in silique walls compared to leaves.

Its subcellular location is the plastid. It is found in the chloroplast membrane. It catalyses the reaction a fatty acyl-[ACP] + a 1-acyl-sn-glycero-3-phosphate = a 1,2-diacyl-sn-glycero-3-phosphate + holo-[ACP]. The catalysed reaction is a 1-acyl-sn-glycero-3-phosphate + an acyl-CoA = a 1,2-diacyl-sn-glycero-3-phosphate + CoA. The protein operates within phospholipid metabolism; CDP-diacylglycerol biosynthesis; CDP-diacylglycerol from sn-glycerol 3-phosphate: step 2/3. Its function is as follows. Plastidial enzyme of the prokaryotic glycerol-3-phosphate pathway that converts lysophosphatidic acid (LPA) into phosphatidic acid by incorporating an acyl moiety at position sn-2. Utilizes palmitoyl-ACP (16:0-ACP) to produce phosphatidic acid containing a saturated group at position sn-2, which is characteristic of lipids synthesized by the prokaryotic pathway. In vitro, can use 16:0-CoA as acyl donor. Essential for embryo development during the transition from the globular to the heart stage when chloroplasts begin to form. This chain is 1-acyl-sn-glycerol-3-phosphate acyltransferase LPAT1, chloroplastic, found in Arabidopsis thaliana (Mouse-ear cress).